The sequence spans 162 residues: MRKTFLTLLCVSSAIAHAADEDITFHGTLLSPPTCSISGGKTIEVEFRDLIIDDINGNYGRKEVPYELTCDSTTRHPDWEMTLTWTGTQTSFNDAAIETDVPGFGIELQHDGQRFKLNTPLAINATDFTQKPKLEAVPVKASDAVLSDTNFSAYATLRVDYQ.

A signal peptide spans 1–18 (MRKTFLTLLCVSSAIAHA).

Belongs to the fimbrial protein family.

Functionally, part of the yfcOPQRSUV fimbrial operon. Could contribute to adhesion to various surfaces in specific environmental niches. Increases adhesion to eukaryotic T24 bladder epithelial cells in the absence of fim genes. This is an uncharacterized protein from Escherichia coli (strain K12).